The chain runs to 376 residues: Chaperone protein DnaJ (376 aa).

The J domain maps to 4–69; the sequence is DFYETLGVQK…QKRAAYDRFG (66 aa). The CR-type zinc-finger motif lies at 133–211; that stretch reads GKTAQIRVPA…CAGQGRVTEE (79 aa). Zn(2+) contacts are provided by cysteine 146, cysteine 149, cysteine 163, cysteine 166, cysteine 185, cysteine 188, cysteine 199, and cysteine 202. 4 CXXCXGXG motif repeats span residues 146-153, 163-170, 185-192, and 199-206; these read CTECSGSG, CSMCHGHG, CPQCQGRG, and CPKCAGQG.

Belongs to the DnaJ family. As to quaternary structure, homodimer. Zn(2+) is required as a cofactor.

It localises to the cytoplasm. Functionally, participates actively in the response to hyperosmotic and heat shock by preventing the aggregation of stress-denatured proteins and by disaggregating proteins, also in an autonomous, DnaK-independent fashion. Unfolded proteins bind initially to DnaJ; upon interaction with the DnaJ-bound protein, DnaK hydrolyzes its bound ATP, resulting in the formation of a stable complex. GrpE releases ADP from DnaK; ATP binding to DnaK triggers the release of the substrate protein, thus completing the reaction cycle. Several rounds of ATP-dependent interactions between DnaJ, DnaK and GrpE are required for fully efficient folding. Also involved, together with DnaK and GrpE, in the DNA replication of plasmids through activation of initiation proteins. The polypeptide is Chaperone protein DnaJ (Mesorhizobium japonicum (strain LMG 29417 / CECT 9101 / MAFF 303099) (Mesorhizobium loti (strain MAFF 303099))).